The primary structure comprises 498 residues: ATP synthase subunit beta, chloroplastic (498 aa).

A Phosphothreonine modification is found at T6. Phosphoserine is present on S13. Residue 172–179 coordinates ATP; the sequence is GGAGVGKT.

Belongs to the ATPase alpha/beta chains family. In terms of assembly, F-type ATPases have 2 components, CF(1) - the catalytic core - and CF(0) - the membrane proton channel. CF(1) has five subunits: alpha(3), beta(3), gamma(1), delta(1), epsilon(1). CF(0) has four main subunits: a(1), b(1), b'(1) and c(9-12).

The protein resides in the plastid. Its subcellular location is the chloroplast thylakoid membrane. The catalysed reaction is ATP + H2O + 4 H(+)(in) = ADP + phosphate + 5 H(+)(out). In terms of biological role, produces ATP from ADP in the presence of a proton gradient across the membrane. The catalytic sites are hosted primarily by the beta subunits. This chain is ATP synthase subunit beta, chloroplastic, found in Barbarea verna (Land cress).